Consider the following 317-residue polypeptide: Lipoyl synthase (317 aa).

The tract at residues 1 to 21 (MVTVIDTLARPRHPEKANRPE) is disordered. Residues 12-21 (RHPEKANRPE) show a composition bias toward basic and acidic residues. 7 residues coordinate [4Fe-4S] cluster: cysteine 57, cysteine 62, cysteine 68, cysteine 83, cysteine 87, cysteine 90, and serine 296. The 217-residue stretch at 69-285 (WEKKHATFMI…ETVAYAKGFL (217 aa)) folds into the Radical SAM core domain.

Belongs to the radical SAM superfamily. Lipoyl synthase family. It depends on [4Fe-4S] cluster as a cofactor.

The protein localises to the cytoplasm. It carries out the reaction [[Fe-S] cluster scaffold protein carrying a second [4Fe-4S](2+) cluster] + N(6)-octanoyl-L-lysyl-[protein] + 2 oxidized [2Fe-2S]-[ferredoxin] + 2 S-adenosyl-L-methionine + 4 H(+) = [[Fe-S] cluster scaffold protein] + N(6)-[(R)-dihydrolipoyl]-L-lysyl-[protein] + 4 Fe(3+) + 2 hydrogen sulfide + 2 5'-deoxyadenosine + 2 L-methionine + 2 reduced [2Fe-2S]-[ferredoxin]. The protein operates within protein modification; protein lipoylation via endogenous pathway; protein N(6)-(lipoyl)lysine from octanoyl-[acyl-carrier-protein]: step 2/2. Its function is as follows. Catalyzes the radical-mediated insertion of two sulfur atoms into the C-6 and C-8 positions of the octanoyl moiety bound to the lipoyl domains of lipoate-dependent enzymes, thereby converting the octanoylated domains into lipoylated derivatives. This chain is Lipoyl synthase, found in Xanthobacter autotrophicus (strain ATCC BAA-1158 / Py2).